Here is a 311-residue protein sequence, read N- to C-terminus: Methionyl-tRNA formyltransferase (311 aa).

110-113 provides a ligand contact to (6S)-5,6,7,8-tetrahydrofolate; sequence SLLP.

This sequence belongs to the Fmt family.

The enzyme catalyses L-methionyl-tRNA(fMet) + (6R)-10-formyltetrahydrofolate = N-formyl-L-methionyl-tRNA(fMet) + (6S)-5,6,7,8-tetrahydrofolate + H(+). In terms of biological role, attaches a formyl group to the free amino group of methionyl-tRNA(fMet). The formyl group appears to play a dual role in the initiator identity of N-formylmethionyl-tRNA by promoting its recognition by IF2 and preventing the misappropriation of this tRNA by the elongation apparatus. The sequence is that of Methionyl-tRNA formyltransferase from Streptococcus pneumoniae (strain Taiwan19F-14).